We begin with the raw amino-acid sequence, 97 residues long: Large ribosomal subunit protein uL23 (97 aa).

The protein belongs to the universal ribosomal protein uL23 family. In terms of assembly, part of the 50S ribosomal subunit. Contacts protein L29, and trigger factor when it is bound to the ribosome.

In terms of biological role, one of the early assembly proteins it binds 23S rRNA. One of the proteins that surrounds the polypeptide exit tunnel on the outside of the ribosome. Forms the main docking site for trigger factor binding to the ribosome. The protein is Large ribosomal subunit protein uL23 of Sulfurihydrogenibium sp. (strain YO3AOP1).